Here is a 279-residue protein sequence, read N- to C-terminus: Undecaprenyl-diphosphatase (279 aa).

8 helical membrane-spanning segments follow: residues 2–22, 44–64, 85–105, 113–133, 163–183, 188–208, 223–243, and 255–275; these read LIIE…TEWL, AFIE…VMLI, WQLW…AVPL, FYFM…FIWI, VLSI…AIIL, TVAA…YSGL, AQVL…LLAI, and FTIF…YSFF.

Belongs to the UppP family.

The protein resides in the cell membrane. It catalyses the reaction di-trans,octa-cis-undecaprenyl diphosphate + H2O = di-trans,octa-cis-undecaprenyl phosphate + phosphate + H(+). In terms of biological role, catalyzes the dephosphorylation of undecaprenyl diphosphate (UPP). Confers resistance to bacitracin. The chain is Undecaprenyl-diphosphatase from Streptococcus pyogenes serotype M12 (strain MGAS2096).